We begin with the raw amino-acid sequence, 380 residues long: Crotonobetainyl-CoA reductase (380 aa).

This sequence belongs to the acyl-CoA dehydrogenase family. Homotetramer. Requires FAD as cofactor.

The protein resides in the cytoplasm. The enzyme catalyses 4-(trimethylamino)butanoyl-CoA + oxidized [electron-transfer flavoprotein] + H(+) = crotonobetainyl-CoA + reduced [electron-transfer flavoprotein]. The protein operates within amine and polyamine metabolism; carnitine metabolism. In terms of biological role, catalyzes the reduction of crotonobetainyl-CoA to gamma-butyrobetainyl-CoA. The chain is Crotonobetainyl-CoA reductase from Proteus sp. (strain LE138).